An 88-amino-acid polypeptide reads, in one-letter code: MAHKKGTGSTRNGRDSRAQRLGVKRYGGQTVTTGSILVRQRGTKVHPGNNVGRGGDDTLFALVDGIVKFEHYKRGRRKVSVYPADASA.

The disordered stretch occupies residues 1–21 (MAHKKGTGSTRNGRDSRAQRL).

The protein belongs to the bacterial ribosomal protein bL27 family.

The sequence is that of Large ribosomal subunit protein bL27 from Picosynechococcus sp. (strain ATCC 27264 / PCC 7002 / PR-6) (Agmenellum quadruplicatum).